We begin with the raw amino-acid sequence, 140 residues long: Ergosterol biosynthetic protein 28 homolog (140 aa).

Helical transmembrane passes span 4 to 24, 52 to 72, 79 to 99, and 105 to 125; these read FLNV…GNTL, TFGI…IDIH, ITLW…FVYG, and IGVL…LVGL.

Belongs to the ERG28 family. Ubiquitous; strongly expressed in testis and some cancer cell lines.

Its subcellular location is the endoplasmic reticulum membrane. This Homo sapiens (Human) protein is Ergosterol biosynthetic protein 28 homolog.